The chain runs to 463 residues: Female germline-specific tumor suppressor gld-1 (463 aa).

Over residues 1–10 (MPSCTTPTYG) the composition is skewed to polar residues. The segment at 1–76 (MPSCTTPTYG…RAPPPARLTL (76 aa)) is disordered. Positions 11-31 (VSTQLESQSSESPSRSSVMTP) are enriched in low complexity. A qua1 domain; involved in homodimerization region spans residues 135–205 (PTATEPIEVE…PEPAGDMISI (71 aa)). The KH domain occupies 208 to 260 (KIYVPKNEYPDYNFVGRILGPRGMTAKQLEQDTGCKIMVRGKGSMRDKSKESA). Residues 305 to 336 (APEGTDELKRKQLMELAIINGTYRPMKSPNPA) form a qua2 domain; involved in RNA binding region. Residues 443–463 (NTNVSPSGASPSASSVNNTSF) are disordered. Low complexity predominate over residues 447 to 457 (SPSGASPSASS).

Homodimer. Post-translationally, phosphorylated by cdk-2 which may negatively regulate its expression in distal mitotic germline cells. In terms of processing, undergoes proteasomal degradation in proximal oocytes following mating. In terms of tissue distribution, expressed in proximal and distal oocytes in female worms but is eliminated from proximal oocytes following mating.

RNA-binding protein which recognizes the 5'-UACUCAU-3' RNA consensus sequence. Binds sequences in both the 5'coding and the 3'-UTR region of rme-2 mRNA. Binds sequences in the 3'-UTR region of cye-1 mRNA. Binds to cyb-2.1, cyb-2.2 and cyb-3 mRNA. Binds sequences in the 3'-UTR region of tra-2 mRNA. Binds to the 3' UTR of Notch receptor homolog glp-1, thereby repressing glp-1 translation in the embryo. Binding to the glp-1 3' UTR is inhibited by pos-1 binding to an overlapping binding site in the glp-1 3' UTR. Germ line-specific tumor suppressor essential for oogenesis. Controls the spatial pattern of translation of multiple oogenesis specific mRNAs (e.g. yolk receptor rme-2) by repression of translation during early meiotic prophase (leptotene to pachytene) and then derepression of translation during diplotene/ diakinesis, following its degradation. Also functions to promote the male sexual fate in the hermaphrodite germline but not the male germline. Represses translation of the vacuolar ATPase component vha-13 in the distal gonad. Functions redundantly with gld-2 to promote the initiation of meiotic development and/or inhibit stem cell proliferation. By regulating cye-1 expression, prevents entry into mitosis in meiotic germline cells. This chain is Female germline-specific tumor suppressor gld-1 (gld-1), found in Caenorhabditis elegans.